Reading from the N-terminus, the 236-residue chain is Adenosine 5'-phosphosulfate reductase (236 aa).

[4Fe-4S] cluster is bound by residues C123, C124, C206, and C209. Catalysis depends on C232, which acts as the Nucleophile; cysteine thiosulfonate intermediate.

Belongs to the PAPS reductase family. CysH subfamily. The cofactor is [4Fe-4S] cluster.

Its subcellular location is the cytoplasm. It carries out the reaction [thioredoxin]-disulfide + sulfite + AMP + 2 H(+) = adenosine 5'-phosphosulfate + [thioredoxin]-dithiol. Its pathway is sulfur metabolism; hydrogen sulfide biosynthesis; sulfite from sulfate. Its function is as follows. Catalyzes the formation of sulfite from adenosine 5'-phosphosulfate (APS) using thioredoxin as an electron donor. The protein is Adenosine 5'-phosphosulfate reductase of Streptomyces coelicolor (strain ATCC BAA-471 / A3(2) / M145).